The chain runs to 503 residues: ATP synthase subunit alpha (503 aa).

Residue 170–177 (GDKQTGKT) coordinates ATP.

This sequence belongs to the ATPase alpha/beta chains family. As to quaternary structure, F-type ATPases have 2 components, CF(1) - the catalytic core - and CF(0) - the membrane proton channel. CF(1) has five subunits: alpha(3), beta(3), gamma(1), delta(1), epsilon(1). CF(0) has three main subunits: a(1), b(2) and c(9-12). The alpha and beta chains form an alternating ring which encloses part of the gamma chain. CF(1) is attached to CF(0) by a central stalk formed by the gamma and epsilon chains, while a peripheral stalk is formed by the delta and b chains.

It is found in the cell inner membrane. It carries out the reaction ATP + H2O + 4 H(+)(in) = ADP + phosphate + 5 H(+)(out). Its function is as follows. Produces ATP from ADP in the presence of a proton gradient across the membrane. The alpha chain is a regulatory subunit. This Helicobacter acinonychis (strain Sheeba) protein is ATP synthase subunit alpha.